Here is a 268-residue protein sequence, read N- to C-terminus: Regulation of nuclear pre-mRNA domain-containing protein 1A (268 aa).

The CID domain maps to 1-133 (MSAFSEAALE…QLRQALYGDR (133 aa)).

It belongs to the UPF0400 (RTT103) family. As to quaternary structure, may form a heterodimer with RPRD1B. Associates with the RNA polymerase II subunit POLR2A (via CTD phosphorylated at 'Ser-2' and 'Ser-7' of the heptad repeats).

The protein localises to the nucleus. In terms of biological role, interacts with phosphorylated C-terminal heptapeptide repeat domain (CTD) of the largest RNA polymerase II subunit POLR2A, and participates in dephosphorylation of the CTD by RPAP2. May act as a negative regulator of cyclin-D1 (CCND1) and cyclin-E (CCNE1) in the cell cycle. The chain is Regulation of nuclear pre-mRNA domain-containing protein 1A (RPRD1A) from Gallus gallus (Chicken).